The primary structure comprises 456 residues: Bifunctional protein GlmU (456 aa).

Positions 1 to 228 (MPQNTLNIVI…SHLAAGVNNK (228 aa)) are pyrophosphorylase. UDP-N-acetyl-alpha-D-glucosamine is bound by residues 11–14 (LAAG), Lys-25, Gln-75, 80–81 (GT), 102–104 (YGD), Gly-138, Glu-153, Asn-168, and Asn-226. A Mg(2+)-binding site is contributed by Asp-104. Asn-226 is a binding site for Mg(2+). The tract at residues 229 to 249 (LQLAELERIFQTGQAQELLKA) is linker. The interval 250–456 (GVTLHDPARF…GWVRPEKDKQ (207 aa)) is N-acetyltransferase. The UDP-N-acetyl-alpha-D-glucosamine site is built by Arg-332 and Lys-350. His-362 serves as the catalytic Proton acceptor. UDP-N-acetyl-alpha-D-glucosamine-binding residues include Tyr-365 and Asn-376. Residues Ala-379, 385-386 (NY), Ser-404, Ala-422, and Arg-439 contribute to the acetyl-CoA site.

This sequence in the N-terminal section; belongs to the N-acetylglucosamine-1-phosphate uridyltransferase family. It in the C-terminal section; belongs to the transferase hexapeptide repeat family. Homotrimer. Requires Mg(2+) as cofactor.

It localises to the cytoplasm. The enzyme catalyses alpha-D-glucosamine 1-phosphate + acetyl-CoA = N-acetyl-alpha-D-glucosamine 1-phosphate + CoA + H(+). It catalyses the reaction N-acetyl-alpha-D-glucosamine 1-phosphate + UTP + H(+) = UDP-N-acetyl-alpha-D-glucosamine + diphosphate. It functions in the pathway nucleotide-sugar biosynthesis; UDP-N-acetyl-alpha-D-glucosamine biosynthesis; N-acetyl-alpha-D-glucosamine 1-phosphate from alpha-D-glucosamine 6-phosphate (route II): step 2/2. The protein operates within nucleotide-sugar biosynthesis; UDP-N-acetyl-alpha-D-glucosamine biosynthesis; UDP-N-acetyl-alpha-D-glucosamine from N-acetyl-alpha-D-glucosamine 1-phosphate: step 1/1. It participates in bacterial outer membrane biogenesis; LPS lipid A biosynthesis. Its function is as follows. Catalyzes the last two sequential reactions in the de novo biosynthetic pathway for UDP-N-acetylglucosamine (UDP-GlcNAc). The C-terminal domain catalyzes the transfer of acetyl group from acetyl coenzyme A to glucosamine-1-phosphate (GlcN-1-P) to produce N-acetylglucosamine-1-phosphate (GlcNAc-1-P), which is converted into UDP-GlcNAc by the transfer of uridine 5-monophosphate (from uridine 5-triphosphate), a reaction catalyzed by the N-terminal domain. The sequence is that of Bifunctional protein GlmU from Neisseria meningitidis serogroup C (strain 053442).